The sequence spans 141 residues: ATP synthase epsilon chain (141 aa).

This sequence belongs to the ATPase epsilon chain family. F-type ATPases have 2 components, CF(1) - the catalytic core - and CF(0) - the membrane proton channel. CF(1) has five subunits: alpha(3), beta(3), gamma(1), delta(1), epsilon(1). CF(0) has three main subunits: a, b and c.

The protein localises to the cell membrane. Produces ATP from ADP in the presence of a proton gradient across the membrane. The protein is ATP synthase epsilon chain of Lactococcus lactis subsp. cremoris (strain MG1363).